The chain runs to 475 residues: Ribulose bisphosphate carboxylase large chain (475 aa).

A propeptide spanning residues 1–2 (MS) is cleaved from the precursor. Proline 3 is modified (N-acetylproline). N6,N6,N6-trimethyllysine is present on lysine 14. Substrate is bound by residues asparagine 123 and threonine 173. The active-site Proton acceptor is lysine 175. Lysine 177 is a substrate binding site. Residues lysine 201, aspartate 203, and glutamate 204 each contribute to the Mg(2+) site. Position 201 is an N6-carboxylysine (lysine 201). Histidine 294 (proton acceptor) is an active-site residue. Substrate contacts are provided by arginine 295, histidine 327, and serine 379.

Belongs to the RuBisCO large chain family. Type I subfamily. As to quaternary structure, heterohexadecamer of 8 large chains and 8 small chains; disulfide-linked. The disulfide link is formed within the large subunit homodimers. Mg(2+) is required as a cofactor. The disulfide bond which can form in the large chain dimeric partners within the hexadecamer appears to be associated with oxidative stress and protein turnover.

It localises to the plastid. The protein localises to the chloroplast. It catalyses the reaction 2 (2R)-3-phosphoglycerate + 2 H(+) = D-ribulose 1,5-bisphosphate + CO2 + H2O. It carries out the reaction D-ribulose 1,5-bisphosphate + O2 = 2-phosphoglycolate + (2R)-3-phosphoglycerate + 2 H(+). Its function is as follows. RuBisCO catalyzes two reactions: the carboxylation of D-ribulose 1,5-bisphosphate, the primary event in carbon dioxide fixation, as well as the oxidative fragmentation of the pentose substrate in the photorespiration process. Both reactions occur simultaneously and in competition at the same active site. In Piper cenocladum (Ant piper), this protein is Ribulose bisphosphate carboxylase large chain.